A 450-amino-acid chain; its full sequence is Benzene 1,2-dioxygenase subunit alpha (450 aa).

Residues 56-163 form the Rieske domain; sequence LLGHETHIRK…VETYKGLIFA (108 aa). Cys-96, His-98, Cys-116, and His-119 together coordinate [2Fe-2S] cluster. Residues His-222 and His-228 each coordinate Fe cation.

This sequence belongs to the bacterial ring-hydroxylating dioxygenase alpha subunit family. As to quaternary structure, this dioxygenase system consists of four proteins: the two subunits of the hydroxylase component (BedC1 and BedC2), a ferredoxin (BedB) and a ferredoxin reductase (BedA). [2Fe-2S] cluster is required as a cofactor. It depends on Fe cation as a cofactor.

The enzyme catalyses benzene + NADH + O2 + H(+) = cis-1,2-dihydrobenzene-1,2-diol + NAD(+). Its pathway is aromatic compound metabolism; benzene degradation; catechol from benzene: step 1/2. This Pseudomonas putida (Arthrobacter siderocapsulatus) protein is Benzene 1,2-dioxygenase subunit alpha (bedC1).